A 942-amino-acid chain; its full sequence is NBPF family member NBPF8 (942 aa).

Residues 89 to 130 are a coiled coil; it reads AEELRQYKVLVHSQERELTQLKEKLQEGRDASRSLNEHLQAL. Residues 161-203 are disordered; that stretch reads KLSPENDEDEDEDVQVEEDEKVQKSSAPREVQKAEESKVPEDS. Acidic residues predominate over residues 165–180; the sequence is ENDEDEDEDVQVEEDE. The region spanning 165–259 is the Olduvai 1 domain; sequence ENDEDEDEDV…ECQDALNILS (95 aa). Residues 190–201 show a composition bias toward basic and acidic residues; the sequence is EVQKAEESKVPE. Residues 339-401 adopt a coiled-coil conformation; sequence KSMLRNERQF…LSLNEHLQAL (63 aa). Olduvai domains follow at residues 436-528, 529-617, 620-675, 676-767, 770-843, and 844-904; these read ENDN…HIIP, ENES…ATGP, SREL…VDMD, EIEK…PPCP, SREL…RSKK, and KRRR…RSVF. Disordered stretches follow at residues 451-474 and 528-566; these read EKVQ…PEDS and PENE…EGYS. 2 stretches are compositionally biased toward acidic residues: residues 530–539 and 550–562; these read NESDDEEEEE and ESEE…ESWD. Over residues 831–849 the composition is skewed to basic residues; the sequence is GKGKIRRGRRSKKKRRRGR. The segment at 831-863 is disordered; it reads GKGKIRRGRRSKKKRRRGRKEGEEDQNPPCPRL.

This sequence belongs to the NBPF family. In terms of tissue distribution, expressed in the mammary gland.

The protein resides in the cytoplasm. The chain is NBPF family member NBPF8 from Homo sapiens (Human).